The following is a 383-amino-acid chain: Omega-6 fatty acid desaturase, endoplasmic reticulum isozyme 2 (383 aa).

3 helical membrane-spanning segments follow: residues 61–81 (TIAFCLYYVATHYFHLLPGPL), 85–105 (GMAIYWAVQGCILTGVWVIAH), and 117–137 (LLDDIVGLILHSALLVPYFSW). A Histidine box-1 motif is present at residues 105 to 109 (HECGH). Positions 141 to 145 (HRRHH) match the Histidine box-2 motif. The next 3 membrane-spanning stretches (helical) occupy residues 179 to 199 (VLTLAVTLTLGWPLYLALNVS), 225 to 245 (IYISDAGVLAVVYGLFRLAMA), and 249 to 269 (AWVVCVYGVPLLVVNGFLVLI). The Histidine box-3 motif lies at 315–319 (HVAHH).

This sequence belongs to the fatty acid desaturase type 1 family.

The protein resides in the endoplasmic reticulum membrane. It participates in lipid metabolism; polyunsaturated fatty acid biosynthesis. In terms of biological role, ER (microsomal) omega-6 fatty acid desaturase introduces the second double bond in the biosynthesis of 18:3 fatty acids, important constituents of plant membranes. It is thought to use cytochrome b5 as an electron donor and to act on fatty acids esterified to phosphatidylcholine and, possibly, other phospholipids. The polypeptide is Omega-6 fatty acid desaturase, endoplasmic reticulum isozyme 2 (FAD2-2) (Glycine max (Soybean)).